Consider the following 141-residue polypeptide: Putative antiporter subunit mnhB2 (141 aa).

The next 4 membrane-spanning stretches (helical) occupy residues serine 10 to glycine 30, glycine 35 to phenylalanine 55, lysine 70 to glycine 90, and leucine 116 to isoleucine 136.

Belongs to the CPA3 antiporters (TC 2.A.63) subunit B family. May form a heterooligomeric complex that consists of seven subunits: mnhA2, mnhB2, mnhC2, mnhD2, mnhE2, mnhF2 and mnhG2.

It localises to the cell membrane. The chain is Putative antiporter subunit mnhB2 (mnhB2) from Staphylococcus epidermidis (strain ATCC 35984 / DSM 28319 / BCRC 17069 / CCUG 31568 / BM 3577 / RP62A).